The sequence spans 907 residues: MPYIFAFFCTGFLGAVVGANFPNNIQIGGLFPNQQSQEHAAFRFALSQLTEPPKLLPQIDIVNISDSFEMTYRFCSQFSKGVYAIFGFYERRTVNMLTSFCGALHVCFITPSFPVDTSNQFVLQLRPELQEALISIIDHYKWQTFVYIYDADRGLSVLQRVLDTAAEKNWQVTAVNILTTTEEGYRMLFQDLEKKKERLVVVDCESERLNAILGQIVKLEKNGIGYHYILANLGFMDIDLNKFKESGANVTGFQLVNYTDTIPARIMQQWRTSDSRDHTRVDWKRPKYTSALTYDGVKVMAEAFQSLRRQRIDISRRGNAGDCLANPAVPWGQGIDIQRALQQVRFEGLTGNVQFNEKGRRTNYTLHVIEMKHDGIRKIGYWNEDDKFVPAATDAQAGGDNSSVQNRTYIVTTILEDPYVMLKKNANQFEGNDRYEGYCVELAAEIAKHVGYSYRLEIVSDGKYGARDPDTKAWNGMVGELVYGRADVAVAPLTITLVREEVIDFSKPFMSLGISIMIKKPQKSKPGVFSFLDPLAYEIWMCIVFAYIGVSVVLFLVSRFSPYEWHSEEFEEGRDQTTSDQSNEFGIFNSLWFSLGAFMQQGCDISPRSLSGRIVGGVWWFFTLIIISSYTANLAAFLTVERMVSPIESAEDLAKQTEIAYGTLEAGSTKEFFRRSKIAVFEKMWTYMKSAEPSVFVRTTEEGMIRVRKSKGKYAYLLESTMNEYIEQRKPCDTMKVGGNLDSKGYGIATPKGSALRNPVNLAVLKLNEQGLLDKLKNKWWYDKGECGSGGGDSKDKTSALSLSNVAGVFYILIGGLGLAMLVALIEFCYKSRSESKRMKGFCLIPQQSINEAIRTSTLPRNSGAGASGGGGSGENGRVVSQDFPKSMQSIPCMSHSSGMPLGATGL.

The first 18 residues, 1 to 18, serve as a signal peptide directing secretion; sequence MPYIFAFFCTGFLGAVVG. Topologically, residues 19 to 536 are extracellular; it reads ANFPNNIQIG…GVFSFLDPLA (518 aa). N-linked (GlcNAc...) asparagine glycans are attached at residues N63, N249, N257, N363, N401, and N406. C75 and C323 are oxidised to a cystine. L-glutamate contacts are provided by P492, T494, and R499. Residues 537 to 557 traverse the membrane as a helical segment; sequence YEIWMCIVFAYIGVSVVLFLV. The Cytoplasmic segment spans residues 558 to 584; that stretch reads SRFSPYEWHSEEFEEGRDQTTSDQSNE. An intramembrane region (helical; Pore-forming) is located at residues 585–600; the sequence is FGIFNSLWFSLGAFMQ. Residues 601 to 603 lie within the membrane without spanning it; the sequence is QGC. A lipid anchor (S-palmitoyl cysteine) is attached at C603. Residues 604–609 lie on the Cytoplasmic side of the membrane; sequence DISPRS. A helical transmembrane segment spans residues 610-630; that stretch reads LSGRIVGGVWWFFTLIIISSY. Residues 631–805 lie on the Extracellular side of the membrane; it reads TANLAAFLTV…DKTSALSLSN (175 aa). Residue S645 is modified to Phosphoserine. L-glutamate is bound by residues S668 and T669. Position 710 is a phosphoserine; by PKC (S710). Residue E719 participates in L-glutamate binding. A disulfide bond links C732 and C787. Residues 806-826 traverse the membrane as a helical segment; that stretch reads VAGVFYILIGGLGLAMLVALI. Residues 827-907 lie on the Cytoplasmic side of the membrane; the sequence is EFCYKSRSES…SGMPLGATGL (81 aa). C829 is lipidated: S-palmitoyl cysteine. The residue at position 849 (S849) is a Phosphoserine; by PKC, PKA and CAMK2. The segment at 857–881 is disordered; sequence STLPRNSGAGASGGGGSGENGRVVS. S863 bears the Phosphoserine; by PKC, PKA and PKG/PRKG2 mark. Positions 866-875 are enriched in gly residues; the sequence is GASGGGGSGE. Residues 904 to 907 carry the PDZ-binding motif; it reads ATGL.

Belongs to the glutamate-gated ion channel (TC 1.A.10.1) family. GRIA1 subfamily. As to quaternary structure, homotetramer or heterotetramer of pore-forming glutamate receptor subunits; heteromeric assembly can be the result of both receptor subtype and flip-flop forms and according the composition, one partner can be dominant with respect to the fast desensitizing current component, whereas the other can determine the steady-state component. Tetramers may be formed by the dimerization of dimers. Found in a complex with GRIA2, GRIA3, GRIA4, CNIH2, CNIH3, CACNG2, CACNG3, CACNG4, CACNG5, CACNG7 and CACNG8. Interacts with HIP1 and RASGRF2. Interacts with SYNDIG1 and GRIA2. Interacts with DLG1 (via C-terminus). Interacts with LRFN1. Interacts with PRKG2. Interacts with CNIH2 and CACNG2. Interacts with CACNG5; this interaction modulates the gating. Interacts (via C-terminus) with PDLIM4 (via LIM domain); this interaction as well as the interaction of PDLIM4 with alpha-actinin is required for their colocalization in early endosomes. Interacts with SNX27 (via PDZ domain); the interaction is required for recycling to the plasma membrane when endocytosed and prevent degradation in lysosomes. Interacts (via PDZ-binding motif) with SHANK3 (via PDZ domain). Interacts with CACNG3; associates GRIA1 with the adapter protein complex 4 (AP-4) to target GRIA1 to the somatodendritic compartment of neurons. Interacts with CACNG2; this interaction mediates traffick to the plasma membrane and modulation of desensitization. Interaction with CNIH2 and CNIH3; this interaction promotes expression at the plasma membrane and extensively modulates their gating properties by slowing deactivation and desensitization kinetics. Found in a complex with GRIA2, GRIA3, GRIA4, DLG4, CACNG8 and CNIH2. Post-translationally, phosphorylated at Ser-645. Phosphorylated at Ser-710 by PKC. Phosphorylated at Ser-849 by PKC, PKA and CAMK2. Phosphorylated at Ser-863 by PKC, PKA and PRKG2. Phosphorylation of Ser-863 is reduced by induction of long-term depression and increased by induction of long-term potentiation. Palmitoylated. Depalmitoylated by CPT1C and upon L-glutamate stimulation. ZDHHC3/GODZ specifically palmitoylates Cys-603, which leads to Golgi retention and decreased cell surface expression. In contrast, Cys-829 palmitoylation does not affect cell surface expression but regulates stimulation-dependent endocytosis. In terms of tissue distribution, detected in cerebellum (at protein level).

Its subcellular location is the cell membrane. It localises to the endoplasmic reticulum membrane. The protein resides in the postsynaptic cell membrane. It is found in the postsynaptic density membrane. The protein localises to the cell projection. Its subcellular location is the dendrite. It localises to the dendritic spine. The protein resides in the early endosome membrane. It is found in the recycling endosome membrane. The protein localises to the presynapse. Its subcellular location is the synapse. The enzyme catalyses Ca(2+)(in) = Ca(2+)(out). It carries out the reaction Na(+)(in) = Na(+)(out). It catalyses the reaction Mg(2+)(in) = Mg(2+)(out). The catalysed reaction is Li(+)(in) = Li(+)(out). The enzyme catalyses K(+)(in) = K(+)(out). It carries out the reaction Sr(2+)(in) = Sr(2+)(out). With respect to regulation, glutamate-gated receptor activity inhibited by DNQX (6,7-dinitroquinoxaline-2,3-dione). Ionotropic glutamate receptor that functions as a ligand-gated cation channel, gated by L-glutamate and glutamatergic agonists such as alpha-amino-3-hydroxy-5-methyl-4-isoxazolepropionic acid (AMPA), quisqualic acid, and kainic acid. L-glutamate acts as an excitatory neurotransmitter at many synapses in the central nervous system. Binding of the excitatory neurotransmitter L-glutamate induces a conformation change, leading to the opening of the cation channel, and thereby converts the chemical signal to an electrical impulse upon entry of monovalent and divalent cations such as sodium and calcium. The receptor then desensitizes rapidly and enters in a transient inactive state, characterized by the presence of bound agonist. In the presence of CACNG2 or CACNG4 or CACNG7 or CACNG8, shows resensitization which is characterized by a delayed accumulation of current flux upon continued application of L-glutamate. Resensitization is blocked by CNIH2 through interaction with CACNG8 in the CACNG8-containing AMPA receptors complex. Calcium (Ca(2+)) permeability depends on subunits composition and, heteromeric channels containing edited GRIA2 subunit are calcium-impermeable. Also permeable to other divalents cations such as strontium(2+) and magnesium(2+) and monovalent cations such as potassium(1+) and lithium(1+). In Rattus norvegicus (Rat), this protein is Glutamate receptor 1.